The sequence spans 304 residues: Ribosomal protein L11 methyltransferase (304 aa).

S-adenosyl-L-methionine-binding residues include threonine 155, glycine 176, aspartate 198, and asparagine 239.

This sequence belongs to the methyltransferase superfamily. PrmA family.

It is found in the cytoplasm. It carries out the reaction L-lysyl-[protein] + 3 S-adenosyl-L-methionine = N(6),N(6),N(6)-trimethyl-L-lysyl-[protein] + 3 S-adenosyl-L-homocysteine + 3 H(+). Methylates ribosomal protein L11. The polypeptide is Ribosomal protein L11 methyltransferase (Caldicellulosiruptor bescii (strain ATCC BAA-1888 / DSM 6725 / KCTC 15123 / Z-1320) (Anaerocellum thermophilum)).